The chain runs to 189 residues: Adenylate kinase (189 aa).

10–15 (GAGKGT) contacts ATP. The NMP stretch occupies residues 30–59 (STGDIFRANVSGGTELGKKAQAYMDRGDLV). AMP contacts are provided by residues T31, R36, 57–59 (DLV), 85–88 (GFPR), and Q92. Residues 126 to 136 (ERARIDNRSDD) are LID. R127 serves as a coordination point for ATP. R133 and R144 together coordinate AMP. G172 is an ATP binding site.

It belongs to the adenylate kinase family. In terms of assembly, monomer.

The protein resides in the cytoplasm. The enzyme catalyses AMP + ATP = 2 ADP. Its pathway is purine metabolism; AMP biosynthesis via salvage pathway; AMP from ADP: step 1/1. In terms of biological role, catalyzes the reversible transfer of the terminal phosphate group between ATP and AMP. Plays an important role in cellular energy homeostasis and in adenine nucleotide metabolism. This Thermobifida fusca (strain YX) protein is Adenylate kinase.